The sequence spans 317 residues: Melanocyte-stimulating hormone receptor (317 aa).

Residues 1–37 (MPVQGSQRRLLGSLNSTPTATPHLGLAANQTGARCLE) lie on the Extracellular side of the membrane. N-linked (GlcNAc...) asparagine glycosylation occurs at Asn29. The helical transmembrane segment at 38–63 (VSVPDGLFLSLGLVSLVENVLVVTAI) threads the bilayer. The Cytoplasmic portion of the chain corresponds to 64-72 (AKNRNLHSP). The chain crosses the membrane as a helical span at residues 73-93 (MYCFICCLALSDLLVSGSNML). Residues 94-118 (ETAVTLLLEAGALAARAAVVQQLDN) are Extracellular-facing. Residues 119 to 140 (VIDVITCSSMLSSLCFLGAIAV) traverse the membrane as a helical segment. At 141-163 (DRYISIFYALRYHSIVTLPRARR) the chain is on the cytoplasmic side. The chain crosses the membrane as a helical span at residues 164 to 183 (AVAAIWVASVLCSTLFIAYY). Over 184–191 (DHAAVLLC) the chain is Extracellular. A helical transmembrane segment spans residues 192–211 (LVVFFLAMLVLMAVLYVHML). Residues 212-240 (ARACQHAQGIARLHKRQRLAHQGFGLKGA) are Cytoplasmic-facing. The helical transmembrane segment at 241 to 266 (ATLTILLGIFFLCWGPFFLHLTLIVL) threads the bilayer. Residues 267-279 (CPQHPTCSCIFKN) lie on the Extracellular side of the membrane. Residues 280–300 (FNLFLALIICNAIIDPLIYAF) traverse the membrane as a helical segment. At 301 to 317 (RSQELRRTLKEVLLCSW) the chain is on the cytoplasmic side. Residue Cys315 is the site of S-palmitoyl cysteine attachment.

This sequence belongs to the G-protein coupled receptor 1 family. Interacts with MGRN1, but does not undergo MGRN1-mediated ubiquitination; this interaction competes with GNAS-binding and thus inhibits agonist-induced cAMP production. Interacts with OPN3; the interaction results in a decrease in MC1R-mediated cAMP signaling and ultimately a decrease in melanin production in melanocytes.

It is found in the cell membrane. In terms of biological role, receptor for MSH (alpha, beta and gamma) and ACTH. The activity of this receptor is mediated by G proteins which activate adenylate cyclase. Mediates melanogenesis, the production of eumelanin (black/brown) and phaeomelanin (red/yellow), via regulation of cAMP signaling in melanocytes. The chain is Melanocyte-stimulating hormone receptor (MC1R) from Macaca sylvanus (Barbary macaque).